The primary structure comprises 336 residues: Dihydroorotate dehydrogenase (quinone) (336 aa).

FMN-binding positions include 62–66 and Thr86; that span reads AGLDK. Lys66 provides a ligand contact to substrate. 111–115 contacts substrate; it reads NRMGF. 2 residues coordinate FMN: Asn139 and Asn172. Substrate is bound at residue Asn172. Ser175 serves as the catalytic Nucleophile. Asn177 serves as a coordination point for substrate. Positions 217 and 245 each coordinate FMN. 246-247 contacts substrate; the sequence is NT. FMN is bound by residues Gly268, Gly297, and 318–319; that span reads YS.

Belongs to the dihydroorotate dehydrogenase family. Type 2 subfamily. In terms of assembly, monomer. Requires FMN as cofactor.

It localises to the cell membrane. The catalysed reaction is (S)-dihydroorotate + a quinone = orotate + a quinol. The protein operates within pyrimidine metabolism; UMP biosynthesis via de novo pathway; orotate from (S)-dihydroorotate (quinone route): step 1/1. Its function is as follows. Catalyzes the conversion of dihydroorotate to orotate with quinone as electron acceptor. The chain is Dihydroorotate dehydrogenase (quinone) from Aeromonas hydrophila subsp. hydrophila (strain ATCC 7966 / DSM 30187 / BCRC 13018 / CCUG 14551 / JCM 1027 / KCTC 2358 / NCIMB 9240 / NCTC 8049).